We begin with the raw amino-acid sequence, 270 residues long: Chymotrypsin-like elastase family member 3A (270 aa).

The segment at residues 1-15 is a signal peptide (or 16); sequence MMLRLLSSLLLVAVA. Positions 16-28 are cleaved as a propeptide — activation peptide; that stretch reads SGYGPPSSHSSSR. Residues 29–268 enclose the Peptidase S1 domain; it reads VVHGEDAVPY…FIDWIEETIA (240 aa). Cysteine 58 and cysteine 74 form a disulfide bridge. The Charge relay system role is filled by histidine 73. The N-linked (GlcNAc...) asparagine glycan is linked to asparagine 114. A disulfide bridge links cysteine 117 with cysteine 120. The Charge relay system role is filled by aspartate 123. Intrachain disulfides connect cysteine 157-cysteine 223, cysteine 188-cysteine 204, and cysteine 213-cysteine 244. Catalysis depends on serine 217, which acts as the Charge relay system.

It belongs to the peptidase S1 family. Elastase subfamily.

The enzyme catalyses Preferential cleavage: Ala-|-Xaa. Does not hydrolyze elastin.. Functionally, efficient protease with alanine specificity but only little elastolytic activity. The polypeptide is Chymotrypsin-like elastase family member 3A (CELA3A) (Homo sapiens (Human)).